The following is a 62-amino-acid chain: Small EDRK-rich factor 1 (62 aa).

Basic and acidic residues-rich tracts occupy residues 1 to 30 (MARG…KEDS) and 50 to 62 (AANE…TREK). The interval 1–62 (MARGNQRELA…ERKSMQTREK (62 aa)) is disordered.

The protein belongs to the SERF family. As to quaternary structure, interacts with SNCA; this interaction promotes the aggregation of SNCA.

The protein resides in the cytoplasm. The protein localises to the cytosol. Its subcellular location is the nucleus. Its function is as follows. Positive regulator of amyloid protein aggregation and proteotoxicity. Induces conformational changes in amyloid proteins, such as APP, HTT, and SNCA, driving them into compact formations preceding the formation of aggregates. This Bos taurus (Bovine) protein is Small EDRK-rich factor 1 (SERF1).